A 509-amino-acid chain; its full sequence is Proto-oncogene tyrosine-protein kinase LCK (509 aa).

The N-myristoyl glycine moiety is linked to residue G2. An interactions with CD4 and CD8 region spans residues 2–72 (GCGCSSHLED…DNLVIALHSY (71 aa)). S-palmitoyl cysteine attachment occurs at residues C3 and C5. The 61-residue stretch at 61–121 (LQDNLVIALH…PFNFVAKANS (61 aa)) folds into the SH3 domain. Residue K99 forms a Glycyl lysine isopeptide (Lys-Gly) (interchain with G-Cter in ubiquitin) linkage. S102 is subject to Phosphoserine. The region spanning 127–224 (WFFKNLSRKD…GLCTRLSRPC (98 aa)) is the SH2 domain. Positions 154–242 (RESESTAGSF…WWEDEWEVPR (89 aa)) are interaction with PTPRH. T159 carries the phosphothreonine modification. S162 carries the phosphoserine modification. Residue Y192 is modified to Phosphotyrosine. S194 carries the phosphoserine modification. In terms of domain architecture, Protein kinase spans 245-498 (LKLVERLGAG…YLRSVLEDFF (254 aa)). Residues 251-259 (LGAGQFGEV) and K273 each bind ATP. A Glycyl lysine isopeptide (Lys-Gly) (interchain with G-Cter in ubiquitin) cross-link involves residue K276. The active-site Proton acceptor is the D364. At Y394 the chain carries Phosphotyrosine; by autocatalysis. Y505 carries the phosphotyrosine; by CSK modification.

It belongs to the protein kinase superfamily. Tyr protein kinase family. As to quaternary structure, binds to the cytoplasmic domain of cell surface receptors, such as AXL, CD2, CD4, CD5, CD8, CD44, CD45 and CD122. Also binds to effector molecules, such as PI4K, VAV1, RASA1, FYB1 and to other protein kinases including CDK1, RAF1, ZAP70 and SYK. Binds to phosphatidylinositol 3'-kinase (PI3K) from T-lymphocytes through its SH3 domain and to the tyrosine phosphorylated form of KHDRBS1/p70 through its SH2 domain. Interacts with SQSTM1. Interacts with phosphorylated LIME1. Interacts with CBLB and PTPRH. Interacts with RUNX3. Forms a signaling complex with EPHA1, PTK2B and PI3-KINASE; upon activation by EFNA1 which may regulate T-lymphocytes migration. Associates with ZAP70 and RHOH; these interactions allow LCK-mediated RHOH and CD3 subunit phosphorylations in the presence of functional ZAP70. Interacts with Saimiriine herpesvirus 2 TIP. Interacts with UNC119; this interaction plays a crucial role in activation of LCK. Interacts with CEACAM1 (via cytoplasmic domain); mediates CEACAM1 phosphorylation resulting in PTPN6 recruitment that dephosphorylates TCR stimulation-induced CD247 and ZAP70. Interacts with CD160. Interacts with CD48. Post-translationally, autophosphorylated on Tyr-394, increasing enzymatic activity, this site is dephosphorylated by PTN22. Phosphorylated on Tyr-505 by CSK, decreasing activity. Dephosphorylated by PTPRC/CD45. Dephosphorylation at Tyr-394 by PTPN2 negatively regulates T-cells differentiation. Dephosphorylation at Tyr-394 by DUSP22 negatively regulates T-cell receptor signaling. Myristoylation is required prior to palmitoylation. In terms of processing, palmitoylation regulates association with the plasma membrane and could be mediated by ZDHHC2. Post-translationally, 'Lys-63'-linked ubiquitinated at Lys-99 and Lys-276 by UBR2; this modification is required for autophosphorylation at Tyr-394. In terms of tissue distribution, expressed specifically in lymphoid cells.

It is found in the cell membrane. The protein localises to the cytoplasm. It localises to the cytosol. It carries out the reaction L-tyrosyl-[protein] + ATP = O-phospho-L-tyrosyl-[protein] + ADP + H(+). Its activity is regulated as follows. The relative activities of the inhibitory tyrosine-protein kinase CSK and the activating tyrosine-protein phosphatase PTPRC/CD45 determine the level of LCK activity. These interactions allow rapid and efficient activation of LCK in response to TCR stimulation. Non-receptor tyrosine-protein kinase that plays an essential role in the selection and maturation of developing T-cells in the thymus and in the function of mature T-cells. Plays a key role in T-cell antigen receptor (TCR)-linked signal transduction pathways. Constitutively associated with the cytoplasmic portions of the CD4 and CD8 surface receptors. Association of the TCR with a peptide antigen-bound MHC complex facilitates the interaction of CD4 and CD8 with MHC class II and class I molecules, respectively, thereby recruiting the associated LCK protein to the vicinity of the TCR/CD3 complex. LCK then phosphorylates tyrosine residues within the immunoreceptor tyrosine-based activation motifs (ITAM) of the cytoplasmic tails of the TCR-gamma chains and CD3 subunits, initiating the TCR/CD3 signaling pathway. Once stimulated, the TCR recruits the tyrosine kinase ZAP70, that becomes phosphorylated and activated by LCK. Following this, a large number of signaling molecules are recruited, ultimately leading to lymphokine production. LCK also contributes to signaling by other receptor molecules. Associates directly with the cytoplasmic tail of CD2, which leads to hyperphosphorylation and activation of LCK. Also plays a role in the IL2 receptor-linked signaling pathway that controls the T-cell proliferative response. Binding of IL2 to its receptor results in increased activity of LCK. Is expressed at all stages of thymocyte development and is required for the regulation of maturation events that are governed by both pre-TCR and mature alpha beta TCR. Phosphorylates other substrates including RUNX3, PTK2B/PYK2, the microtubule-associated protein MAPT, RHOH or TYROBP. The protein is Proto-oncogene tyrosine-protein kinase LCK (LCK) of Saimiri sciureus (Common squirrel monkey).